A 346-amino-acid chain; its full sequence is Biotin synthase (346 aa).

The segment covering 1-12 (MPDTATVSSESE) has biased composition (polar residues). The interval 1 to 21 (MPDTATVSSESEFSGHAHVAA) is disordered. The 229-residue stretch at 64 to 292 (NKVQLCSLLS…QSMVRLSAGR (229 aa)) folds into the Radical SAM core domain. The [4Fe-4S] cluster site is built by cysteine 79, cysteine 83, and cysteine 86. [2Fe-2S] cluster contacts are provided by cysteine 123, cysteine 155, cysteine 215, and arginine 287.

This sequence belongs to the radical SAM superfamily. Biotin synthase family. As to quaternary structure, homodimer. It depends on [4Fe-4S] cluster as a cofactor. [2Fe-2S] cluster serves as cofactor.

It catalyses the reaction (4R,5S)-dethiobiotin + (sulfur carrier)-SH + 2 reduced [2Fe-2S]-[ferredoxin] + 2 S-adenosyl-L-methionine = (sulfur carrier)-H + biotin + 2 5'-deoxyadenosine + 2 L-methionine + 2 oxidized [2Fe-2S]-[ferredoxin]. Its pathway is cofactor biosynthesis; biotin biosynthesis; biotin from 7,8-diaminononanoate: step 2/2. Functionally, catalyzes the conversion of dethiobiotin (DTB) to biotin by the insertion of a sulfur atom into dethiobiotin via a radical-based mechanism. The protein is Biotin synthase of Myxococcus xanthus (strain DK1622).